A 152-amino-acid chain; its full sequence is Small ribosomal subunit protein uS5 (152 aa).

One can recognise an S5 DRBM domain in the interval 14–77 (FEEVIVNIGR…DDAHKNLVKV (64 aa)).

This sequence belongs to the universal ribosomal protein uS5 family. Part of the 30S ribosomal subunit. Contacts proteins S4 and S8.

With S4 and S12 plays an important role in translational accuracy. Its function is as follows. Located at the back of the 30S subunit body where it stabilizes the conformation of the head with respect to the body. The chain is Small ribosomal subunit protein uS5 from Sulfurovum sp. (strain NBC37-1).